A 322-amino-acid chain; its full sequence is CRISPR-associated endonuclease Cas1 (322 aa).

3 residues coordinate Mn(2+): Glu149, His214, and Glu229.

This sequence belongs to the CRISPR-associated endonuclease Cas1 family. As to quaternary structure, homodimer, forms a heterotetramer with a Cas2 homodimer. Requires Mg(2+) as cofactor. Mn(2+) is required as a cofactor.

In terms of biological role, CRISPR (clustered regularly interspaced short palindromic repeat), is an adaptive immune system that provides protection against mobile genetic elements (viruses, transposable elements and conjugative plasmids). CRISPR clusters contain spacers, sequences complementary to antecedent mobile elements, and target invading nucleic acids. CRISPR clusters are transcribed and processed into CRISPR RNA (crRNA). Acts as a dsDNA endonuclease. Involved in the integration of spacer DNA into the CRISPR cassette. This chain is CRISPR-associated endonuclease Cas1, found in Pyrococcus horikoshii (strain ATCC 700860 / DSM 12428 / JCM 9974 / NBRC 100139 / OT-3).